Here is a 130-residue protein sequence, read N- to C-terminus: Small ribosomal subunit protein uS8 (130 aa).

It belongs to the universal ribosomal protein uS8 family. As to quaternary structure, part of the 30S ribosomal subunit.

In terms of biological role, one of the primary rRNA binding proteins, it binds directly to 16S rRNA central domain where it helps coordinate assembly of the platform of the 30S subunit. This is Small ribosomal subunit protein uS8 from Methanobrevibacter smithii (strain ATCC 35061 / DSM 861 / OCM 144 / PS).